A 479-amino-acid chain; its full sequence is Sulfate adenylyltransferase subunit 1 (479 aa).

The region spanning 25-239 (KSLLRFLTCG…EVLETVDIQR (215 aa)) is the tr-type G domain. The interval 34–41 (GSVDDGKS) is G1. 34 to 41 (GSVDDGKS) is a GTP binding site. A G2 region spans residues 92–96 (GITID). Residues 113 to 116 (DTPG) form a G3 region. GTP-binding positions include 113 to 117 (DTPGH) and 168 to 171 (NKMD). The segment at 168-171 (NKMD) is G4. Residues 206 to 208 (SAL) are G5.

The protein belongs to the TRAFAC class translation factor GTPase superfamily. Classic translation factor GTPase family. CysN/NodQ subfamily. In terms of assembly, heterodimer composed of CysD, the smaller subunit, and CysN.

The enzyme catalyses sulfate + ATP + H(+) = adenosine 5'-phosphosulfate + diphosphate. It functions in the pathway sulfur metabolism; hydrogen sulfide biosynthesis; sulfite from sulfate: step 1/3. With CysD forms the ATP sulfurylase (ATPS) that catalyzes the adenylation of sulfate producing adenosine 5'-phosphosulfate (APS) and diphosphate, the first enzymatic step in sulfur assimilation pathway. APS synthesis involves the formation of a high-energy phosphoric-sulfuric acid anhydride bond driven by GTP hydrolysis by CysN coupled to ATP hydrolysis by CysD. The sequence is that of Sulfate adenylyltransferase subunit 1 from Salmonella gallinarum (strain 287/91 / NCTC 13346).